The sequence spans 103 residues: N(4)-acetylcytidine amidohydrolase (103 aa).

The ASCH domain occupies 6 to 101 (ITFFQRFQDD…QTQFYVIEFK (96 aa)). Lys21 acts as the Proton acceptor in catalysis. The active-site Nucleophile is the Thr24. Glu74 serves as the catalytic Proton donor.

It belongs to the N(4)-acetylcytidine amidohydrolase family.

The catalysed reaction is N(4)-acetylcytidine + H2O = cytidine + acetate + H(+). It catalyses the reaction N(4)-acetyl-2'-deoxycytidine + H2O = 2'-deoxycytidine + acetate + H(+). It carries out the reaction N(4)-acetylcytosine + H2O = cytosine + acetate + H(+). Functionally, catalyzes the hydrolysis of N(4)-acetylcytidine (ac4C). In Escherichia coli (strain SE11), this protein is N(4)-acetylcytidine amidohydrolase (yqfB).